The primary structure comprises 393 residues: Formate-dependent phosphoribosylglycinamide formyltransferase (393 aa).

Residues 22–23 (EL) and Glu82 contribute to the N(1)-(5-phospho-beta-D-ribosyl)glycinamide site. Residues Arg114, Lys155, 160–165 (SSGKGQ), 195–198 (EGFI), and Glu203 each bind ATP. One can recognise an ATP-grasp domain in the interval 119-308 (RLAAEELKLP…QFALHARAIL (190 aa)). Residues Glu267 and Glu279 each coordinate Mg(2+). Residues Asp286, Lys356, and 363 to 364 (RR) each bind N(1)-(5-phospho-beta-D-ribosyl)glycinamide.

It belongs to the PurK/PurT family. Homodimer.

The enzyme catalyses N(1)-(5-phospho-beta-D-ribosyl)glycinamide + formate + ATP = N(2)-formyl-N(1)-(5-phospho-beta-D-ribosyl)glycinamide + ADP + phosphate + H(+). It functions in the pathway purine metabolism; IMP biosynthesis via de novo pathway; N(2)-formyl-N(1)-(5-phospho-D-ribosyl)glycinamide from N(1)-(5-phospho-D-ribosyl)glycinamide (formate route): step 1/1. Involved in the de novo purine biosynthesis. Catalyzes the transfer of formate to 5-phospho-ribosyl-glycinamide (GAR), producing 5-phospho-ribosyl-N-formylglycinamide (FGAR). Formate is provided by PurU via hydrolysis of 10-formyl-tetrahydrofolate. The sequence is that of Formate-dependent phosphoribosylglycinamide formyltransferase from Pseudomonas savastanoi pv. phaseolicola (strain 1448A / Race 6) (Pseudomonas syringae pv. phaseolicola (strain 1448A / Race 6)).